Reading from the N-terminus, the 444-residue chain is Tubulin beta-7 chain (444 aa).

GTP-binding residues include Gln11, Glu69, Ser138, Gly142, Thr143, Gly144, Asn204, and Asn226. Glu69 contributes to the Mg(2+) binding site.

This sequence belongs to the tubulin family. Dimer of alpha and beta chains. A typical microtubule is a hollow water-filled tube with an outer diameter of 25 nm and an inner diameter of 15 nM. Alpha-beta heterodimers associate head-to-tail to form protofilaments running lengthwise along the microtubule wall with the beta-tubulin subunit facing the microtubule plus end conferring a structural polarity. Microtubules usually have 13 protofilaments but different protofilament numbers can be found in some organisms and specialized cells. It depends on Mg(2+) as a cofactor. In terms of tissue distribution, expressed in roots, leaf sheaths, and suspension cultured cells.

It localises to the cytoplasm. Its subcellular location is the cytoskeleton. Tubulin is the major constituent of microtubules, a cylinder consisting of laterally associated linear protofilaments composed of alpha- and beta-tubulin heterodimers. Microtubules grow by the addition of GTP-tubulin dimers to the microtubule end, where a stabilizing cap forms. Below the cap, tubulin dimers are in GDP-bound state, owing to GTPase activity of alpha-tubulin. The polypeptide is Tubulin beta-7 chain (TUBB7) (Oryza sativa subsp. japonica (Rice)).